Here is a 481-residue protein sequence, read N- to C-terminus: Beta-1,3-glucan-binding protein (481 aa).

The first 17 residues, 1–17 (MKVLVVFIFCLVRSTFG), serve as a signal peptide directing secretion. Residues 19–123 (FEVPDALVEV…QKFVVKQLLD (105 aa)) enclose the CBM39 domain. Residues 211–481 (HRLTIRPVPS…EVDYVKVSAL (271 aa)) form the GH16 domain. A glycan (N-linked (GlcNAc...) asparagine) is linked at Asn467.

The protein belongs to the insect beta-1,3-glucan binding protein family. Post-translationally, the N-terminus is blocked. Hemolymph.

The protein localises to the secreted. Its function is as follows. Involved in the recognition of invading microorganisms. Binds specifically to beta-1,3-glucan and activates the phenoloxidase cascade. This Tenebrio molitor (Yellow mealworm beetle) protein is Beta-1,3-glucan-binding protein (GRP).